A 191-amino-acid chain; its full sequence is Protein NUCLEAR FUSION DEFECTIVE 2 (191 aa).

The N-terminal stretch at 1–29 is a signal peptide; the sequence is MATLRFTLLLLVFVVGIFFSFSSVSHVRA. The RNase III domain maps to 48–167; it reads LAKLQTQIGY…IFGAIAIDAG (120 aa).

In terms of biological role, required for karyogamy during female gametophyte development, when the two polar nuclei fuse to form the diploid central cell nucleus. The polypeptide is Protein NUCLEAR FUSION DEFECTIVE 2 (Arabidopsis thaliana (Mouse-ear cress)).